The sequence spans 153 residues: 6,7-dimethyl-8-ribityllumazine synthase (153 aa).

5-amino-6-(D-ribitylamino)uracil-binding positions include Phe22, 56-58, and 80-82; these read AFE and TVI. 85–86 contacts (2S)-2-hydroxy-3-oxobutyl phosphate; sequence ST. His88 acts as the Proton donor in catalysis. Phe113 contacts 5-amino-6-(D-ribitylamino)uracil. Position 127 (Arg127) interacts with (2S)-2-hydroxy-3-oxobutyl phosphate.

Belongs to the DMRL synthase family. Forms an icosahedral capsid composed of 60 subunits, arranged as a dodecamer of pentamers.

The catalysed reaction is (2S)-2-hydroxy-3-oxobutyl phosphate + 5-amino-6-(D-ribitylamino)uracil = 6,7-dimethyl-8-(1-D-ribityl)lumazine + phosphate + 2 H2O + H(+). It participates in cofactor biosynthesis; riboflavin biosynthesis; riboflavin from 2-hydroxy-3-oxobutyl phosphate and 5-amino-6-(D-ribitylamino)uracil: step 1/2. Functionally, catalyzes the formation of 6,7-dimethyl-8-ribityllumazine by condensation of 5-amino-6-(D-ribitylamino)uracil with 3,4-dihydroxy-2-butanone 4-phosphate. This is the penultimate step in the biosynthesis of riboflavin. This chain is 6,7-dimethyl-8-ribityllumazine synthase, found in Actinobacillus pleuropneumoniae (Haemophilus pleuropneumoniae).